We begin with the raw amino-acid sequence, 164 residues long: S-ribosylhomocysteine lyase (164 aa).

Residues His54, His58, and Cys128 each contribute to the Fe cation site.

It belongs to the LuxS family. In terms of assembly, homodimer. Requires Fe cation as cofactor.

The enzyme catalyses S-(5-deoxy-D-ribos-5-yl)-L-homocysteine = (S)-4,5-dihydroxypentane-2,3-dione + L-homocysteine. Functionally, involved in the synthesis of autoinducer 2 (AI-2) which is secreted by bacteria and is used to communicate both the cell density and the metabolic potential of the environment. The regulation of gene expression in response to changes in cell density is called quorum sensing. Catalyzes the transformation of S-ribosylhomocysteine (RHC) to homocysteine (HC) and 4,5-dihydroxy-2,3-pentadione (DPD). This is S-ribosylhomocysteine lyase from Campylobacter jejuni subsp. jejuni serotype O:6 (strain 81116 / NCTC 11828).